Here is a 1026-residue protein sequence, read N- to C-terminus: Multidrug resistance protein MdtC (1026 aa).

Helical transmembrane passes span 12 to 32, 333 to 353, 360 to 380, 387 to 407, 431 to 451, 463 to 483, 528 to 548, 853 to 873, 897 to 917, 953 to 973, and 984 to 1004; these read VATT…FSLL, EVEQ…FIFL, LIPA…MYLC, LSLM…IVVL, VGFT…PLLL, FAVT…TLTP, WVLA…VSIP, LLLI…LYES, LFGA…IGIV, PIMM…LTHG, and ITIV…TPVV.

The protein belongs to the resistance-nodulation-cell division (RND) (TC 2.A.6) family. MdtC subfamily. As to quaternary structure, part of a tripartite efflux system composed of MdtA, MdtB and MdtC. MdtC forms a heteromultimer with MdtB.

It is found in the cell inner membrane. This chain is Multidrug resistance protein MdtC, found in Serratia proteamaculans (strain 568).